A 135-amino-acid chain; its full sequence is Cofilin-4 (135 aa).

The 133-residue stretch at 3-135 folds into the ADF-H domain; it reads SCASINDEVI…SQSLVEERCK (133 aa).

It belongs to the actin-binding proteins ADF family.

The protein resides in the cytoplasm. The protein localises to the cytoskeleton. Functionally, controls actin polymerization and depolymerization. In Dictyostelium discoideum (Social amoeba), this protein is Cofilin-4 (cofE).